Here is a 795-residue protein sequence, read N- to C-terminus: Multiple C2 domain and transmembrane region protein 12 (795 aa).

3 consecutive C2 domains span residues 24-142, 180-298, and 341-463; these read RNPR…PQWY, VCAS…SAPA, and YSSD…TCSY. The Ca(2+) site is built by asparagine 57, aspartate 109, and asparagine 113. A run of 4 helical transmembrane segments spans residues 590 to 610, 612 to 632, 730 to 750, and 752 to 772; these read CTPK…EYYI, WLVT…VILL, FVLI…CLGW, and LHVR…LPWF.

It belongs to the MCTP family. Ca(2+) is required as a cofactor. As to expression, expressed in root vascular tissues and meristems. Observed in flowers.

It localises to the endoplasmic reticulum membrane. Functionally, may function as a signaling molecule by regulating the trafficking of other regulators. This is Multiple C2 domain and transmembrane region protein 12 from Arabidopsis thaliana (Mouse-ear cress).